The primary structure comprises 303 residues: Ribosomal protein L11 methyltransferase (303 aa).

Positions 144, 165, 187, and 235 each coordinate S-adenosyl-L-methionine.

Belongs to the methyltransferase superfamily. PrmA family.

The protein resides in the cytoplasm. The enzyme catalyses L-lysyl-[protein] + 3 S-adenosyl-L-methionine = N(6),N(6),N(6)-trimethyl-L-lysyl-[protein] + 3 S-adenosyl-L-homocysteine + 3 H(+). In terms of biological role, methylates ribosomal protein L11. This chain is Ribosomal protein L11 methyltransferase, found in Prochlorococcus marinus (strain AS9601).